Here is a 324-residue protein sequence, read N- to C-terminus: tRNA dimethylallyltransferase (324 aa).

ATP is bound at residue 20-27; it reads GPTASGKS. 22–27 serves as a coordination point for substrate; the sequence is TASGKS. Interaction with substrate tRNA regions lie at residues 45–48, 168–172, and 284–291; these read DSAL, QRLIR, and KRQITWLR.

It belongs to the IPP transferase family. In terms of assembly, monomer. Mg(2+) serves as cofactor.

It catalyses the reaction adenosine(37) in tRNA + dimethylallyl diphosphate = N(6)-dimethylallyladenosine(37) in tRNA + diphosphate. In terms of biological role, catalyzes the transfer of a dimethylallyl group onto the adenine at position 37 in tRNAs that read codons beginning with uridine, leading to the formation of N6-(dimethylallyl)adenosine (i(6)A). This Hydrogenovibrio crunogenus (strain DSM 25203 / XCL-2) (Thiomicrospira crunogena) protein is tRNA dimethylallyltransferase.